The sequence spans 233 residues: Large ribosomal subunit protein uL2 (233 aa).

A disordered region spans residues 194-233 (HPHGGGNHQHVGRPSTVGRGTPPGRKVGRLSPKRRKKYGR). A compositionally biased stretch (basic residues) spans 219–233 (KVGRLSPKRRKKYGR).

The protein belongs to the universal ribosomal protein uL2 family. As to quaternary structure, part of the 50S ribosomal subunit. Forms a bridge to the 30S subunit in the 70S ribosome.

Its function is as follows. One of the primary rRNA binding proteins. Required for association of the 30S and 50S subunits to form the 70S ribosome, for tRNA binding and peptide bond formation. It has been suggested to have peptidyltransferase activity; this is somewhat controversial. Makes several contacts with the 16S rRNA in the 70S ribosome. This is Large ribosomal subunit protein uL2 from Picrophilus torridus (strain ATCC 700027 / DSM 9790 / JCM 10055 / NBRC 100828 / KAW 2/3).